Here is a 616-residue protein sequence, read N- to C-terminus: Dihydroxy-acid dehydratase (616 aa).

Aspartate 81 contacts Mg(2+). A [2Fe-2S] cluster-binding site is contributed by cysteine 122. Residues aspartate 123 and lysine 124 each coordinate Mg(2+). Lysine 124 is modified (N6-carboxylysine). Cysteine 195 is a binding site for [2Fe-2S] cluster. Residue glutamate 491 coordinates Mg(2+). The active-site Proton acceptor is the serine 517.

Belongs to the IlvD/Edd family. Homodimer. [2Fe-2S] cluster is required as a cofactor. It depends on Mg(2+) as a cofactor.

The catalysed reaction is (2R)-2,3-dihydroxy-3-methylbutanoate = 3-methyl-2-oxobutanoate + H2O. It carries out the reaction (2R,3R)-2,3-dihydroxy-3-methylpentanoate = (S)-3-methyl-2-oxopentanoate + H2O. It functions in the pathway amino-acid biosynthesis; L-isoleucine biosynthesis; L-isoleucine from 2-oxobutanoate: step 3/4. Its pathway is amino-acid biosynthesis; L-valine biosynthesis; L-valine from pyruvate: step 3/4. Its function is as follows. Functions in the biosynthesis of branched-chain amino acids. Catalyzes the dehydration of (2R,3R)-2,3-dihydroxy-3-methylpentanoate (2,3-dihydroxy-3-methylvalerate) into 2-oxo-3-methylpentanoate (2-oxo-3-methylvalerate) and of (2R)-2,3-dihydroxy-3-methylbutanoate (2,3-dihydroxyisovalerate) into 2-oxo-3-methylbutanoate (2-oxoisovalerate), the penultimate precursor to L-isoleucine and L-valine, respectively. The protein is Dihydroxy-acid dehydratase of Shigella flexneri.